The primary structure comprises 534 residues: Inorganic phosphate transporter 1-6 (534 aa).

The Cytoplasmic portion of the chain corresponds to 1–29; that stretch reads MGGGGGEQQQLEVLHALDVAKTQWYHFTA. Residues 30-50 traverse the membrane as a helical segment; it reads IVVAGMGFFTDAYDLFCISLV. The Extracellular segment spans residues 51-75; the sequence is TKLLGRIYYRVDGSPSPGTLPPHVS. A helical transmembrane segment spans residues 76-96; sequence ASVNGVAFVGTLSGQLFFGWL. Over 97 to 104 the chain is Cytoplasmic; that stretch reads GDKLGRKR. Residues 105–125 traverse the membrane as a helical segment; the sequence is VYGITLMLMVLCSLASALSFG. Residues 126–127 are Extracellular-facing; the sequence is HT. Residues 128–148 form a helical membrane-spanning segment; it reads PTSVMATLCFFRFWLGFGIGG. Residues 149–168 lie on the Cytoplasmic side of the membrane; that stretch reads DYPLSATIMSEYANKKTRGA. A helical transmembrane segment spans residues 169–189; it reads FIAAVFAMQGFGIITGGLVAI. At 190–216 the chain is on the extracellular side; that stretch reads LVSASFRAAFPAPPYGEDPVASTPPQA. The chain crosses the membrane as a helical span at residues 217–237; sequence DFVWRIILMLGALPAALTYYW. The Cytoplasmic segment spans residues 238 to 294; it reads RTKMPETARYTALVANNAKQAAADMSKVLQVVEMRNIGNNGGSRRPFGLFSGEFVRR. Residues 295–315 traverse the membrane as a helical segment; it reads HGLHLVGTSATWLLLDIAFYS. Over 316 to 350 the chain is Extracellular; the sequence is QNLFQKDIFSAVGWIPKAATMSALEELFRIARAQT. The chain crosses the membrane as a helical span at residues 351–371; it reads LIALCGTVPGYWFTVALIDVV. Topologically, residues 372 to 375 are cytoplasmic; the sequence is GRFK. Residues 376-396 form a helical membrane-spanning segment; sequence IQAVGFFMMTLFMLTLALPYH. The Extracellular portion of the chain corresponds to 397–405; that stretch reads HWTAPGKNH. A helical transmembrane segment spans residues 406–426; it reads VGFLLLYGLTFFFANFGPNST. Over 427-445 the chain is Cytoplasmic; sequence TFIVPAEIFPARLRATCHG. The helical transmembrane segment at 446–466 threads the bilayer; that stretch reads ISAASGKLGAIVGSFGFLYLA. The Extracellular segment spans residues 467–486; sequence QSPDRSKTEHGYPPGIGVRN. A helical transmembrane segment spans residues 487–507; it reads SLFLLAACNLLGLLFTFLVPE. Residues 508–534 are Cytoplasmic-facing; it reads SKGKSLEEMSGDAEAQEEAPPPLQTVL. The interval 514–534 is disordered; that stretch reads EEMSGDAEAQEEAPPPLQTVL.

It belongs to the major facilitator superfamily. Phosphate:H(+) symporter (TC 2.A.1.9) family. In terms of tissue distribution, highly expressed in leaves and at low levels in roots. Expressed in leaf xylem parenchyma cells.

It localises to the membrane. Functionally, high-affinity transporter for external inorganic phosphate (Pi). Probably involved in Pi uptake, translocation and internal transport throughout the plant. The sequence is that of Inorganic phosphate transporter 1-6 (PHT1-6) from Oryza sativa subsp. japonica (Rice).